A 629-amino-acid polypeptide reads, in one-letter code: MFYPDHFDVIIIGGGHAGTEAAMASARMGCQTLLLTHNIDTLGQMSCNPAIGGIGKGHLVKEIDAMGGLMAQAIDKGGIQFRILNASKGPAVRATRAQADRVLYRQAVRGALENQPNLMIFQQAVEDLIMEGDRVVGAVTQIGLKFRARAVVLTVGTFLDGKIHIGMDHYSGGRAGDPPSVSLSRRLRELPFRVNRLKTGTPPRIDAHSIDFSRLATQHGDDPLPVFSFLGSADQHPRQIPCYITYTNDKTHEVIRQNLDRSPMYAGIIEGVGPRYCPSIEDKVMRFADRDAHQIFLEPEGLTSNEIYPNGISTSLPFDVQMKIVHSMQGLENARIVRPGYAIEYDFFDPRDLKLTLESKLIEGLFFAGQINGTTGYEEAAAQGMLAGLNAARLAMGKDGWSPRRDQAYLGVLVDDLCTLGTKEPYRMFTSRAEYRLLLREDNADLRLTETGRQLGMVDDVRWERFCAKQEQIERERQRLRDIWVHPGSDGVEQLNPLLKASLTREANGEELLRRPEMDYARLTHLERFGPALVDSQAAEQVEIQIKYQGYIARQQEEIARQMRNEHTLLPAAMDFSTVSGLSNEVIAKLNDHKPNSIGQASRISGVTPAAISILLVWLKKQGLRHRSP.

Residues 13–18 (GGGHAG), V125, and S180 contribute to the FAD site. Position 273–287 (273–287 (GPRYCPSIEDKVMRF)) interacts with NAD(+). Q370 contacts FAD.

This sequence belongs to the MnmG family. Homodimer. Heterotetramer of two MnmE and two MnmG subunits. FAD serves as cofactor.

The protein localises to the cytoplasm. NAD-binding protein involved in the addition of a carboxymethylaminomethyl (cmnm) group at the wobble position (U34) of certain tRNAs, forming tRNA-cmnm(5)s(2)U34. The chain is tRNA uridine 5-carboxymethylaminomethyl modification enzyme MnmG from Sodalis glossinidius (strain morsitans).